The sequence spans 364 residues: MSGLFETLGRRALFAFDAEQAHGLSIAGLKTGLVTCGAPNDPALSVKVAGLQFPNPLGMAAGYDKNAEVPDALLKLGFGFTEIGTITPRPQSGNPRPRIFRLVEDRAVINRLGFNNEGHDAAFKRLSQRAGKSGIVGVNIGANKDAEDRIADYVAGIRRFYQLARYFTVNISSPNTPGLRNLQARDSLRELLSRVLEARNEEGKMCTLKRPVFLKIAPDLANEELDDIAAEATEQKLDGIIISNTTLSRAGLKSAENRDETGGLSGAPLFDRSTIVLARMRERVGPDMPLIGVGGVDSAETALTKIKAGADLVQLYTGLIYRGPNLPAEIVRGLSAAVKREGVTNIAALRDRDTKDWARRELSA.

FMN is bound by residues 61 to 65 (AGYDK) and T85. Position 65 (K65) interacts with substrate. 110 to 114 (NRLGF) provides a ligand contact to substrate. Positions 139 and 170 each coordinate FMN. Residue N170 participates in substrate binding. S173 serves as the catalytic Nucleophile. Residue N175 coordinates substrate. 2 residues coordinate FMN: K215 and S243. 244-245 (NT) contributes to the substrate binding site. Residues G266, G295, and 316–317 (YT) contribute to the FMN site.

This sequence belongs to the dihydroorotate dehydrogenase family. Type 2 subfamily. As to quaternary structure, monomer. FMN is required as a cofactor.

The protein resides in the cell membrane. It carries out the reaction (S)-dihydroorotate + a quinone = orotate + a quinol. The protein operates within pyrimidine metabolism; UMP biosynthesis via de novo pathway; orotate from (S)-dihydroorotate (quinone route): step 1/1. In terms of biological role, catalyzes the conversion of dihydroorotate to orotate with quinone as electron acceptor. The polypeptide is Dihydroorotate dehydrogenase (quinone) (Brucella anthropi (strain ATCC 49188 / DSM 6882 / CCUG 24695 / JCM 21032 / LMG 3331 / NBRC 15819 / NCTC 12168 / Alc 37) (Ochrobactrum anthropi)).